The primary structure comprises 270 residues: uncharacterized protein (270 aa).

To T.pallidum TP_0127, TP_0315 and TP_0618.

This is an uncharacterized protein from Treponema pallidum (strain Nichols).